The chain runs to 133 residues: NADPH-dependent 7-cyano-7-deazaguanine reductase (133 aa).

The active-site Thioimide intermediate is cysteine 46. The active-site Proton donor is the aspartate 53. Residues 68–70 (VEL) and 87–88 (HE) each bind substrate.

The protein belongs to the GTP cyclohydrolase I family. QueF type 1 subfamily.

Its subcellular location is the cytoplasm. The catalysed reaction is 7-aminomethyl-7-carbaguanine + 2 NADP(+) = 7-cyano-7-deazaguanine + 2 NADPH + 3 H(+). The protein operates within tRNA modification; tRNA-queuosine biosynthesis. Catalyzes the NADPH-dependent reduction of 7-cyano-7-deazaguanine (preQ0) to 7-aminomethyl-7-deazaguanine (preQ1). In Parasynechococcus marenigrum (strain WH8102), this protein is NADPH-dependent 7-cyano-7-deazaguanine reductase.